The following is a 779-amino-acid chain: Putative helicase V13 (779 aa).

Residues 477–642 enclose the SF3 helicase domain; sequence DNPKPFITSL…FVKEEELNEK (166 aa). 504–511 contacts ATP; the sequence is GKSNAGKS.

The sequence is that of Putative helicase V13 from Acanthamoeba polyphaga (Amoeba).